Here is a 261-residue protein sequence, read N- to C-terminus: 6-phosphogluconolactonase (261 aa).

It belongs to the glucosamine/galactosamine-6-phosphate isomerase family. 6-phosphogluconolactonase subfamily.

It catalyses the reaction 6-phospho-D-glucono-1,5-lactone + H2O = 6-phospho-D-gluconate + H(+). It participates in carbohydrate degradation; pentose phosphate pathway; D-ribulose 5-phosphate from D-glucose 6-phosphate (oxidative stage): step 2/3. In terms of biological role, hydrolysis of 6-phosphogluconolactone to 6-phosphogluconate. The sequence is that of 6-phosphogluconolactonase (pgl) from Streptomyces coelicolor (strain ATCC BAA-471 / A3(2) / M145).